A 443-amino-acid polypeptide reads, in one-letter code: Glucose-6-phosphate isomerase (443 aa).

Glutamate 285 functions as the Proton donor in the catalytic mechanism. Catalysis depends on residues histidine 306 and lysine 420.

Belongs to the GPI family.

The protein resides in the cytoplasm. It catalyses the reaction alpha-D-glucose 6-phosphate = beta-D-fructose 6-phosphate. It functions in the pathway carbohydrate biosynthesis; gluconeogenesis. Its pathway is carbohydrate degradation; glycolysis; D-glyceraldehyde 3-phosphate and glycerone phosphate from D-glucose: step 2/4. In terms of biological role, catalyzes the reversible isomerization of glucose-6-phosphate to fructose-6-phosphate. The polypeptide is Glucose-6-phosphate isomerase (Staphylococcus epidermidis (strain ATCC 12228 / FDA PCI 1200)).